The chain runs to 918 residues: GPI ethanolamine phosphate transferase 3 (918 aa).

Residues 16–36 form a helical membrane-spanning segment; that stretch reads IGTWKYIQACIFFAIILISNF. N-linked (GlcNAc...) asparagine glycans are attached at residues Asn54, Asn71, Asn101, Asn197, and Asn399. 15 helical membrane passes run 429–449, 459–479, 486–506, 523–543, 547–563, 567–587, 616–636, 651–671, 687–707, 715–735, 738–758, 762–782, 813–833, 853–873, and 887–907; these read LFPM…LALL, MSAN…ILIL, SPFP…LNSF, FSIF…FTVW, LCHF…FCKC, MSPL…LQVI, TLIV…ILQL, LSIL…HHVF, SLAN…FFLL, INVI…LSFL, PLGH…IQLK, PSVG…SHFF, IFMF…IPLF, FSFI…AGFF, and FMLS…QCFG.

This sequence belongs to the PIGG/PIGN/PIGO family. PIGO subfamily. Glycosylated.

It is found in the endoplasmic reticulum membrane. It participates in glycolipid biosynthesis; glycosylphosphatidylinositol-anchor biosynthesis. In terms of biological role, involved in glycosylphosphatidylinositol-anchor biosynthesis. Transfers ethanolamine phosphate to the GPI third mannose which links the GPI-anchor to the C-terminus of the proteins by an amide bond. Involved in cell wall biosynthesis. In Schizosaccharomyces pombe (strain 972 / ATCC 24843) (Fission yeast), this protein is GPI ethanolamine phosphate transferase 3 (gpi13).